A 100-amino-acid chain; its full sequence is Large ribosomal subunit protein uL23 (100 aa).

Belongs to the universal ribosomal protein uL23 family. Part of the 50S ribosomal subunit. Contacts protein L29, and trigger factor when it is bound to the ribosome.

Functionally, one of the early assembly proteins it binds 23S rRNA. One of the proteins that surrounds the polypeptide exit tunnel on the outside of the ribosome. Forms the main docking site for trigger factor binding to the ribosome. This Synechococcus sp. (strain WH7803) protein is Large ribosomal subunit protein uL23.